The sequence spans 108 residues: Urease subunit beta (108 aa).

It belongs to the urease beta subunit family. Probable heterotrimer of UreA (gamma), UreB (beta) and UreC (alpha) subunits. Three heterotrimers associate to form the active enzyme. The trimeric urease interacts with an accessory complex composed of UreD, UreF and UreG, which is required for the assembly of the nickel containing metallocenter of UreC. The UreE protein may also play a direct role in nickel transfer to the urease apoprotein.

The protein resides in the cytoplasm. The catalysed reaction is urea + 2 H2O + H(+) = hydrogencarbonate + 2 NH4(+). It functions in the pathway nitrogen metabolism; urea degradation; CO(2) and NH(3) from urea (urease route): step 1/1. The chain is Urease subunit beta from Proteus mirabilis (strain HI4320).